The primary structure comprises 578 residues: Transmembrane protein 121B (578 aa).

Disordered regions lie at residues 1-84 (MRPA…ESLS) and 106-129 (AGPAPVAFSSSAATSSSTSTPTSS). Composition is skewed to low complexity over residues 8 to 17 (PRSVSSASGS) and 44 to 53 (GDSSTSTSTS). Positions 54 to 67 (RGGGGGRRGGGGGS) are enriched in gly residues. Serine 167 carries the post-translational modification Phosphoserine. Residues 529 to 557 (RARGGYGAPPSAPPPPPPPPQGGSQLGHC) are disordered. The segment covering 538–549 (PSAPPPPPPPPQ) has biased composition (pro residues). A Phosphoserine modification is found at serine 552.

This sequence belongs to the TMEM121 family. As to expression, widely expressed, especially in adult heart, brain, prostate, testes, peripherical blood leukocytes and fetal brain.

The chain is Transmembrane protein 121B from Homo sapiens (Human).